The sequence spans 144 residues: Transcription antitermination protein NusB (144 aa).

It belongs to the NusB family.

In terms of biological role, involved in transcription antitermination. Required for transcription of ribosomal RNA (rRNA) genes. Binds specifically to the boxA antiterminator sequence of the ribosomal RNA (rrn) operons. In Paraburkholderia xenovorans (strain LB400), this protein is Transcription antitermination protein NusB.